A 187-amino-acid chain; its full sequence is uncharacterized protein (187 aa).

Positions 139–168 (ESKDRKALKNAARKAEKNAHEESSYFRVDD) are enriched in basic and acidic residues. Residues 139–172 (ESKDRKALKNAARKAEKNAHEESSYFRVDDPEPE) form a disordered region.

This is an uncharacterized protein from Caenorhabditis elegans.